The primary structure comprises 382 residues: Glutaminyl-peptide cyclotransferase-like protein (382 aa).

The helical transmembrane segment at 35–55 threads the bilayer; it reads LLPLLLALAVGSAFYTIWSGW. A disulfide bridge connects residues Cys167 and Cys191. Asp186 lines the Zn(2+) pocket. The Proton acceptor role is filled by Glu225. Glu226 serves as a coordination point for Zn(2+). Asp269 acts as the Proton acceptor in catalysis. His351 is a Zn(2+) binding site.

This sequence belongs to the glutaminyl-peptide cyclotransferase family.

The protein resides in the golgi apparatus membrane. It carries out the reaction N-terminal L-glutaminyl-[peptide] = N-terminal 5-oxo-L-prolyl-[peptide] + NH4(+). Functionally, responsible for the biosynthesis of pyroglutamyl peptides. This chain is Glutaminyl-peptide cyclotransferase-like protein (QPCTL), found in Macaca fascicularis (Crab-eating macaque).